The primary structure comprises 178 residues: Glucagon-2 (178 aa).

Residues 1–21 form the signal peptide; it reads MFGIHSLAGVLLLVIVQSQLA. 3 propeptides span residues 83 to 87, 123 to 134, and 171 to 178; these read SGAPS, ESAEESMNGPMS, and SNKRQEDH.

This sequence belongs to the glucagon family.

Its subcellular location is the secreted. Promotes hydrolysis of glycogen and lipids, and raises the blood sugar level. The chain is Glucagon-2 (gcg2) from Oncorhynchus mykiss (Rainbow trout).